A 439-amino-acid polypeptide reads, in one-letter code: MLRFAPSPTGDMHIGNLRAAIFNYIVAKQQHKPFLIRIEDTDKERNIEGKDQEILEILKLMGISWDKLVYQSRNIDYHREMAEKLLKENKAFYCYASTEFLEREKEKAKNEKRPFRYLDEWAALEKDKHHAPVVRLKAPNHAVSFNDAIKKEVEFEPYELDSFVLLRKDKSPTYNFACACDDLLYEISLIIRGEDHVSNTPKQILIQQALGSNNPIVYAHLPIILDETSGKKMSKRDEVSSVKWLLNQGFLPEAIVNYLITIGNKVPKEVFSLDEAIEWFDLENLSSSPAHFNLKYLKHLNHEHLKLLDDEKLLELILIKDKNLLGLLRLFIEECGTLLELKEKISLFLEPKDIVKTYENEDFKERCLVLFNALKSMDFQAYKDFESFKKEAMRLSQLKGKDFFKPLRILLTGNSHGVELPLIFPYIQSHHQKVLRLKA.

The short motif at P6–N16 is the 'HIGH' region element. The 'KMSKS' region signature appears at K232–R236. K235 is a binding site for ATP.

This sequence belongs to the class-I aminoacyl-tRNA synthetase family. Glutamate--tRNA ligase type 1 subfamily. Monomer.

The protein localises to the cytoplasm. It carries out the reaction tRNA(Glu) + L-glutamate + ATP = L-glutamyl-tRNA(Glu) + AMP + diphosphate. Functionally, catalyzes the attachment of glutamate to tRNA(Glu) in a two-step reaction: glutamate is first activated by ATP to form Glu-AMP and then transferred to the acceptor end of tRNA(Glu). This chain is Glutamate--tRNA ligase 2, found in Helicobacter pylori (strain Shi470).